The sequence spans 145 residues: Large ribosomal subunit protein bL9 (145 aa).

Belongs to the bacterial ribosomal protein bL9 family.

In terms of biological role, binds to the 23S rRNA. The polypeptide is Large ribosomal subunit protein bL9 (Mesomycoplasma hyopneumoniae (strain J / ATCC 25934 / NCTC 10110) (Mycoplasma hyopneumoniae)).